A 236-amino-acid polypeptide reads, in one-letter code: Small ribosomal subunit protein uS3 (236 aa).

The KH type-2 domain maps to Ile-39 to Gly-112. The disordered stretch occupies residues Tyr-212–Arg-236.

It belongs to the universal ribosomal protein uS3 family. In terms of assembly, part of the 30S ribosomal subunit. Forms a tight complex with proteins S10 and S14.

In terms of biological role, binds the lower part of the 30S subunit head. Binds mRNA in the 70S ribosome, positioning it for translation. In Rhodopirellula baltica (strain DSM 10527 / NCIMB 13988 / SH1), this protein is Small ribosomal subunit protein uS3.